A 33-amino-acid polypeptide reads, in one-letter code: Rugosin-B (33 aa).

A disulfide bridge links cysteine 27 with cysteine 33.

It belongs to the frog skin active peptide (FSAP) family. Brevinin subfamily. In terms of tissue distribution, expressed by the skin glands.

The protein resides in the secreted. In terms of biological role, shows antibacterial activity against both Gram-negative and Gram-positive bacteria. The polypeptide is Rugosin-B (Glandirana rugosa (Japanese wrinkled frog)).